We begin with the raw amino-acid sequence, 257 residues long: Serine/arginine-rich splicing factor 1 (257 aa).

Ser2 is subject to N-acetylserine. The 76-residue stretch at 16–91 (CRIYVGNLPP…YRLRVEFPRS (76 aa)) folds into the RRM 1 domain. A disordered region spans residues 88 to 116 (FPRSGRGTGRGGGGGGGGGAPRGRYGPPS). The span at 93–108 (RGTGRGGGGGGGGGAP) shows a compositional bias: gly residues. The 75-residue stretch at 121–195 (YRVIVSGLPP…ETAYIRVKVD (75 aa)) folds into the RRM 2 domain.

The protein resides in the cytoplasm. It localises to the nucleus speckle. In terms of biological role, may play a role in preventing exon skipping, ensuring the accuracy of splicing and regulating alternative splicing. The polypeptide is Serine/arginine-rich splicing factor 1 (SRSF1) (Gallus gallus (Chicken)).